Reading from the N-terminus, the 259-residue chain is Probable mobile endonuclease D (259 aa).

To phage T4 mobB and mobC.

In Enterobacteria phage T4 (Bacteriophage T4), this protein is Probable mobile endonuclease D (mobD).